Here is a 158-residue protein sequence, read N- to C-terminus: Aspartate carbamoyltransferase regulatory chain (158 aa).

The Zn(2+) site is built by C111, C116, C140, and C143.

The protein belongs to the PyrI family. In terms of assembly, contains catalytic and regulatory chains. It depends on Zn(2+) as a cofactor.

Its function is as follows. Involved in allosteric regulation of aspartate carbamoyltransferase. This is Aspartate carbamoyltransferase regulatory chain from Metallosphaera sedula (strain ATCC 51363 / DSM 5348 / JCM 9185 / NBRC 15509 / TH2).